The sequence spans 256 residues: Thiazole synthase (256 aa).

Catalysis depends on lysine 95, which acts as the Schiff-base intermediate with DXP. 1-deoxy-D-xylulose 5-phosphate contacts are provided by residues glycine 156, 182 to 183 (AG), and 204 to 205 (NT).

This sequence belongs to the ThiG family. Homotetramer. Forms heterodimers with either ThiH or ThiS.

Its subcellular location is the cytoplasm. The enzyme catalyses [ThiS sulfur-carrier protein]-C-terminal-Gly-aminoethanethioate + 2-iminoacetate + 1-deoxy-D-xylulose 5-phosphate = [ThiS sulfur-carrier protein]-C-terminal Gly-Gly + 2-[(2R,5Z)-2-carboxy-4-methylthiazol-5(2H)-ylidene]ethyl phosphate + 2 H2O + H(+). Its pathway is cofactor biosynthesis; thiamine diphosphate biosynthesis. Its function is as follows. Catalyzes the rearrangement of 1-deoxy-D-xylulose 5-phosphate (DXP) to produce the thiazole phosphate moiety of thiamine. Sulfur is provided by the thiocarboxylate moiety of the carrier protein ThiS. In vitro, sulfur can be provided by H(2)S. In Cronobacter sakazakii (strain ATCC BAA-894) (Enterobacter sakazakii), this protein is Thiazole synthase.